Here is a 185-residue protein sequence, read N- to C-terminus: Ribosome-recycling factor (185 aa).

It belongs to the RRF family.

Its subcellular location is the cytoplasm. Functionally, responsible for the release of ribosomes from messenger RNA at the termination of protein biosynthesis. May increase the efficiency of translation by recycling ribosomes from one round of translation to another. This Roseiflexus sp. (strain RS-1) protein is Ribosome-recycling factor.